Consider the following 1062-residue polypeptide: Carbamoyl phosphate synthase pyrimidine-specific large chain (1062 aa).

Residues 1-401 (MGKREDIKKI…SLLKAVRSLE (401 aa)) form a carboxyphosphate synthetic domain region. 12 residues coordinate ATP: R129, R169, G175, G176, K208, I210, E215, G241, V242, H243, Q284, and E298. The ATP-grasp 1 domain occupies 133–327 (RALMKELNEP…IAKIAAKIAV (195 aa)). Q284, E298, and N300 together coordinate Mg(2+). Residues Q284, E298, and N300 each contribute to the Mn(2+) site. The interval 402–546 (AGVYHLDQPD…YGTYEEENES (145 aa)) is oligomerization domain. The tract at residues 547-929 (ERTDKKSILV…ALYKGLIASG (383 aa)) is carbamoyl phosphate synthetic domain. Positions 671 to 861 (EQTLVELNIP…MANVATKVML (191 aa)) constitute an ATP-grasp 2 domain. Residues R707, R746, L748, E752, G777, V778, H779, S780, Q820, and E832 each contribute to the ATP site. Residues Q820, E832, and N834 each coordinate Mg(2+). Residues Q820, E832, and N834 each contribute to the Mn(2+) site. In terms of domain architecture, MGS-like spans 930–1062 (MSIPTHGSVL…FSAESMPVMQ (133 aa)). Residues 930–1062 (MSIPTHGSVL…FSAESMPVMQ (133 aa)) form an allosteric domain region.

This sequence belongs to the CarB family. Composed of two chains; the small (or glutamine) chain promotes the hydrolysis of glutamine to ammonia, which is used by the large (or ammonia) chain to synthesize carbamoyl phosphate. Tetramer of heterodimers (alpha,beta)4. Mg(2+) is required as a cofactor. Mn(2+) serves as cofactor.

The enzyme catalyses hydrogencarbonate + L-glutamine + 2 ATP + H2O = carbamoyl phosphate + L-glutamate + 2 ADP + phosphate + 2 H(+). It catalyses the reaction hydrogencarbonate + NH4(+) + 2 ATP = carbamoyl phosphate + 2 ADP + phosphate + 2 H(+). It functions in the pathway amino-acid biosynthesis; L-arginine biosynthesis; carbamoyl phosphate from bicarbonate: step 1/1. It participates in pyrimidine metabolism; UMP biosynthesis via de novo pathway; (S)-dihydroorotate from bicarbonate: step 1/3. In terms of biological role, small subunit of the glutamine-dependent carbamoyl phosphate synthetase (CPSase). CPSase catalyzes the formation of carbamoyl phosphate from the ammonia moiety of glutamine, carbonate, and phosphate donated by ATP, constituting the first step of the biosynthetic pathway leading to pyrimidine nucleotides. The large subunit (synthetase) binds the substrates ammonia (free or transferred from glutamine from the small subunit), hydrogencarbonate and ATP and carries out an ATP-coupled ligase reaction, activating hydrogencarbonate by forming carboxy phosphate which reacts with ammonia to form carbamoyl phosphate. The polypeptide is Carbamoyl phosphate synthase pyrimidine-specific large chain (pyrAB) (Halalkalibacterium halodurans (strain ATCC BAA-125 / DSM 18197 / FERM 7344 / JCM 9153 / C-125) (Bacillus halodurans)).